The following is a 216-amino-acid chain: uncharacterized protein (216 aa).

The span at 182–193 shows a compositional bias: polar residues; that stretch reads STSNASVNSDDA. A disordered region spans residues 182–204; it reads STSNASVNSDDASTAELGPTSEE.

This is an uncharacterized protein from Caenorhabditis elegans.